A 359-amino-acid polypeptide reads, in one-letter code: MEMFDGLKIYGSGNYLEGVTDRDSLFICAVATTETSRIPGITGAGASPELTEYTPAADVELIVHDAPRCLPEIPQTIVEGEAAPTPAVITKAALELAEVPFMVADAGASVKPDVPYININSEPGGDIRTGRAVTEPQRIYERGLMVGRTLSSLTEHLVVGESTPAGTTTALGVLTALGYDADFRVSASMPHNPHDLKREVVMAGLSNAGIEKGDCSREPFRAVEAVGDPMIPAVAGICMGSTVPVTLAGGTQMTAVCALMRAIDPDFDFSDTAIATTIFVAEDSTSDINRIAEQIGDIDIYVVDPDFGSASHRGLHEYLNGSVKEGVGAGGAMLLALLHGIPVEMVRERIEELCNTILA.

The protein belongs to the UPF0284 family.

The sequence is that of UPF0284 protein MTH_1426 from Methanothermobacter thermautotrophicus (strain ATCC 29096 / DSM 1053 / JCM 10044 / NBRC 100330 / Delta H) (Methanobacterium thermoautotrophicum).